The following is a 58-amino-acid chain: Small ribosomal subunit protein bS21 (58 aa).

The segment at 36 to 58 is disordered; sequence RHHETPVEKYKRKLQQRRRSRRR. A compositionally biased stretch (basic residues) spans 45–58; the sequence is YKRKLQQRRRSRRR.

This sequence belongs to the bacterial ribosomal protein bS21 family.

The chain is Small ribosomal subunit protein bS21 from Prochlorococcus marinus (strain NATL1A).